The primary structure comprises 638 residues: Chaperone protein DnaK (638 aa).

Threonine 198 bears the Phosphothreonine; by autocatalysis mark. Residues 603–618 (QQAQAQQAQGADADAQ) show a composition bias toward low complexity. The disordered stretch occupies residues 603–638 (QQAQAQQAQGADADAQQSKEDDVVDAEFEEVKDDKK). Acidic residues predominate over residues 624-638 (DVVDAEFEEVKDDKK).

Belongs to the heat shock protein 70 family.

In terms of biological role, acts as a chaperone. In Vibrio campbellii (strain ATCC BAA-1116), this protein is Chaperone protein DnaK.